A 106-amino-acid chain; its full sequence is uncharacterized protein (106 aa).

The first 22 residues, 1–22 (MKKHPNLLLGFSVYLSAGTKLT), serve as a signal peptide directing secretion. Residues 23-46 (IPPEAEQHTAPSDNNKRKRAKCDD) form a disordered region.

This is an uncharacterized protein from Arabidopsis thaliana (Mouse-ear cress).